The sequence spans 963 residues: Unconventional myosin-XIX (963 aa).

The Myosin motor domain occupies 35–758 (HQLDDLTKVN…MLELLECGRA (724 aa)). 132–139 (GESGAGKT) serves as a coordination point for ATP. The tract at residues 602–624 (LEQLLQVLHNTTPHYIRCIKPNS) is actin-binding. IQ domains lie at 762–782 (EQCA…KQEK) and 783–812 (QRRA…AATV). A myMOMA region region spans residues 829–963 (SKELDGMEEK…LLESHRPVQV (135 aa)).

Belongs to the TRAFAC class myosin-kinesin ATPase superfamily. Myosin family. Myosin is a hexamer of 2 heavy chains and 4 light chains: interacts with myosin light chains MYL9 and MYL12B.

The protein resides in the mitochondrion outer membrane. The protein localises to the cytoplasm. It localises to the cytoskeleton. Functionally, actin-based motor molecule with ATPase activity that localizes to the mitochondrion outer membrane. Motor protein that moves towards the plus-end of actin filaments. Required for mitochondrial inheritance during mitosis. May be involved in mitochondrial transport or positioning. The polypeptide is Unconventional myosin-XIX (Mus musculus (Mouse)).